The chain runs to 190 residues: Guanylate kinase (190 aa).

The region spanning 3 to 185 (NYIFIISAPS…SLEQLCKYFE (183 aa)) is the Guanylate kinase-like domain. Position 10–17 (10–17 (APSGAGKS)) interacts with ATP.

Belongs to the guanylate kinase family.

It localises to the cytoplasm. It catalyses the reaction GMP + ATP = GDP + ADP. In terms of biological role, essential for recycling GMP and indirectly, cGMP. In Francisella tularensis subsp. holarctica (strain LVS), this protein is Guanylate kinase.